We begin with the raw amino-acid sequence, 237 residues long: Ribonuclease PH (237 aa).

Residues R86 and G124–R126 contribute to the phosphate site.

The protein belongs to the RNase PH family. As to quaternary structure, homohexameric ring arranged as a trimer of dimers.

It catalyses the reaction tRNA(n+1) + phosphate = tRNA(n) + a ribonucleoside 5'-diphosphate. Functionally, phosphorolytic 3'-5' exoribonuclease that plays an important role in tRNA 3'-end maturation. Removes nucleotide residues following the 3'-CCA terminus of tRNAs; can also add nucleotides to the ends of RNA molecules by using nucleoside diphosphates as substrates, but this may not be physiologically important. Probably plays a role in initiation of 16S rRNA degradation (leading to ribosome degradation) during starvation. The protein is Ribonuclease PH of Rhodopseudomonas palustris (strain ATCC BAA-98 / CGA009).